A 314-amino-acid chain; its full sequence is Formate-nitrite transporter (314 aa).

The Cytoplasmic segment spans residues 1-47 (MQKSTSKYVIDPISIKTNCSSEESYIRCVEYGKGKAHYRNLILLAKA). The helical transmembrane segment at 48–68 (ILAGVFVGVCAHASGIAGGLF) threads the bilayer. Topologically, residues 69-77 (YYHKLREYV) are extracellular. Residues 78–98 (GISMSAFVYGFTFPIAFLCII) form a helical membrane-spanning segment. Residues 99–128 (CTGSDLFTGNTLAVTTALLQKKLGLLCYMR) are Cytoplasmic-facing. Residues 129–149 (VMCISLVGNYIGAVAFAFFVS) traverse the membrane as a helical segment. Topologically, residues 150-185 (YGSGAFSINTDTSKNHIFQFLNDIAIKKVSHSFIEC) are extracellular. A helical transmembrane segment spans residues 186 to 206 (ICLAIGCNIFVCLAVYFVLSI). Residues 207–211 (KDGSG) lie on the Cytoplasmic side of the membrane. Residues 212–232 (LVFSVFFAVYAFAIAGYEHII) traverse the membrane as a helical segment. Topologically, residues 233–260 (ANIYTLNLALMISNDISFTQVYFKNLLP) are extracellular. A helical transmembrane segment spans residues 261-281 (TLIGNYIAGGLVLAFPLFFIY). The Cytoplasmic segment spans residues 282–314 (RSCYYDYDKMNDELNTVVLKTLSLELQNESNHI).

This sequence belongs to the FNT transporter (TC 1.A.16) family. In terms of assembly, homopentamer.

Its subcellular location is the cell membrane. The protein localises to the vacuole membrane. The catalysed reaction is (S)-lactate(in) + H(+)(in) = (S)-lactate(out) + H(+)(out). It carries out the reaction formate(in) + H(+)(in) = formate(out) + H(+)(out). It catalyses the reaction pyruvate(out) + H(+)(out) = pyruvate(in) + H(+)(in). The enzyme catalyses acetate(out) + H(+)(out) = acetate(in) + H(+)(in). Inhibited by the Malaria Box compound MMV007839 and its derivatives BH296 and BH267.meta. Monocarboxylate-proton symporter that mediates the efflux of the waste product lactate in the intraerythrocytic parasites; active in acidic-to-neutral pH range. Transports L-lactate. The chain is Formate-nitrite transporter from Plasmodium malariae.